Reading from the N-terminus, the 158-residue chain is Small ribosomal subunit protein uS9 (158 aa).

It belongs to the universal ribosomal protein uS9 family.

The sequence is that of Small ribosomal subunit protein uS9 from Brucella melitensis biotype 2 (strain ATCC 23457).